Here is a 416-residue protein sequence, read N- to C-terminus: Esterase FrsA (416 aa).

Positions 19-39 (ETSTLVRRTRHDQETQGLHST) are disordered.

This sequence belongs to the FrsA family.

The catalysed reaction is a carboxylic ester + H2O = an alcohol + a carboxylate + H(+). Functionally, catalyzes the hydrolysis of esters. This is Esterase FrsA from Pectobacterium atrosepticum (strain SCRI 1043 / ATCC BAA-672) (Erwinia carotovora subsp. atroseptica).